A 255-amino-acid polypeptide reads, in one-letter code: 1-(5-phosphoribosyl)-5-[(5-phosphoribosylamino)methylideneamino] imidazole-4-carboxamide isomerase (255 aa).

The active-site Proton acceptor is D8. The Proton donor role is filled by D129.

The protein belongs to the HisA/HisF family.

The protein localises to the cytoplasm. It catalyses the reaction 1-(5-phospho-beta-D-ribosyl)-5-[(5-phospho-beta-D-ribosylamino)methylideneamino]imidazole-4-carboxamide = 5-[(5-phospho-1-deoxy-D-ribulos-1-ylimino)methylamino]-1-(5-phospho-beta-D-ribosyl)imidazole-4-carboxamide. The protein operates within amino-acid biosynthesis; L-histidine biosynthesis; L-histidine from 5-phospho-alpha-D-ribose 1-diphosphate: step 4/9. This chain is 1-(5-phosphoribosyl)-5-[(5-phosphoribosylamino)methylideneamino] imidazole-4-carboxamide isomerase, found in Prochlorococcus marinus (strain MIT 9301).